The sequence spans 748 residues: SNF-related serine/threonine-protein kinase (748 aa).

Positions 16 to 269 constitute a Protein kinase domain; the sequence is YDLDKTLGRG…LEEIESHPWL (254 aa). ATP-binding positions include 22 to 30 and K45; that span reads LGRGHFAVV. D139 acts as the Proton acceptor in catalysis. At S162 the chain carries Phosphoserine. Position 173 is a phosphothreonine; by LKB1 (T173). A UBA domain is found at 291–334; that stretch reads SEEEHNSIIQRMVLGDIADRDAIVEALETNRYNHITATYFLLAE. S362, S390, S482, S495, and S518 each carry phosphoserine. A disordered region spans residues 383 to 415; it reads SHATVPQSPARAGDNVLNGHRSKGLCDPAKKDE. Residues 491-503 show a composition bias toward acidic residues; the sequence is EEGESDDEFDMDE. The interval 491–640 is disordered; sequence EEGESDDEFD…SPSPASASAA (150 aa). Positions 522 to 532 are enriched in basic residues; the sequence is VHKRYHRRKSQ. Residues 533 to 542 show a composition bias toward low complexity; sequence GRGSSCSSSE. At R534 the chain carries Omega-N-methylarginine. Residues 549–558 are compositionally biased toward basic and acidic residues; it reads ESRRRLDKDS. Gly residues-rich tracts occupy residues 575 to 592 and 600 to 614; these read GSEGDGGGQSKPSSGGGV and QGTGGGSQGGSGGTP. The residue at position 606 (S606) is a Phosphoserine. Residues 629–640 show a composition bias toward low complexity; that stretch reads SSSPSPASASAA.

This sequence belongs to the protein kinase superfamily. CAMK Ser/Thr protein kinase family. The cofactor is Mg(2+). Post-translationally, autophosphorylated. Phosphorylation on Thr-173 by STK11/LKB1 in complex with STE20-related adapter-alpha (STRADA) pseudo kinase and CAB39. In terms of tissue distribution, ubiquitously expressed in all tissues examined.

Its subcellular location is the nucleus. It carries out the reaction L-seryl-[protein] + ATP = O-phospho-L-seryl-[protein] + ADP + H(+). The catalysed reaction is L-threonyl-[protein] + ATP = O-phospho-L-threonyl-[protein] + ADP + H(+). Its activity is regulated as follows. Activated by phosphorylation on Thr-173. May play a role in hematopoietic cell proliferation or differentiation. Potential mediator of neuronal apoptosis. The chain is SNF-related serine/threonine-protein kinase from Mus musculus (Mouse).